The sequence spans 217 residues: Ribonuclease HII (217 aa).

One can recognise an RNase H type-2 domain in the interval 34–217; the sequence is WPVAGTDEAG…RMSFRPLKRD (184 aa). The a divalent metal cation site is built by Asp-40, Glu-41, and Asp-131.

This sequence belongs to the RNase HII family. The cofactor is Mn(2+). Mg(2+) serves as cofactor.

Its subcellular location is the cytoplasm. The catalysed reaction is Endonucleolytic cleavage to 5'-phosphomonoester.. Its function is as follows. Endonuclease that specifically degrades the RNA of RNA-DNA hybrids. In Agrobacterium fabrum (strain C58 / ATCC 33970) (Agrobacterium tumefaciens (strain C58)), this protein is Ribonuclease HII.